Reading from the N-terminus, the 286-residue chain is B3 domain-containing protein REM11 (286 aa).

Residues 1 to 70 (MAWNLAIITL…TPMLSLVSTQ (70 aa)) constitute a DNA-binding region (TF-B3 1). Residues 68–114 (STQSTSHKSQKRECSKHSEKESISAVPSKGKKNRKARSNREERRDSS) form a disordered region. Basic and acidic residues predominate over residues 78-89 (KRECSKHSEKES). The segment at residues 119–219 (NRFVTFTPED…RAQVCFYGVF (101 aa)) is a DNA-binding region (TF-B3 2).

The protein resides in the nucleus. This is B3 domain-containing protein REM11 (REM11) from Arabidopsis thaliana (Mouse-ear cress).